We begin with the raw amino-acid sequence, 529 residues long: Cytochrome P450 monooxygenase patI (529 aa).

Residues methionine 1–proline 8 are Cytoplasmic-facing. A helical transmembrane segment spans residues serine 9–leucine 25. The Lumenal segment spans residues lysine 26 to aspartate 529. 2 N-linked (GlcNAc...) asparagine glycosylation sites follow: asparagine 81 and asparagine 383. Residue cysteine 449 coordinates heme.

This sequence belongs to the cytochrome P450 family. It depends on heme as a cofactor.

It is found in the endoplasmic reticulum membrane. It carries out the reaction 3-hydroxybenzyl alcohol + reduced [NADPH--hemoprotein reductase] + O2 = gentisyl alcohol + oxidized [NADPH--hemoprotein reductase] + H2O + H(+). It functions in the pathway mycotoxin biosynthesis; patulin biosynthesis. Functionally, cytochrome P450 monooxygenase; part of the gene cluster that mediates the biosynthesis of patulin, an acetate-derived tetraketide mycotoxin produced by several fungal species that shows antimicrobial properties against several bacteria. PatI catalyzes the conversion of m-hydroxybenzyl alcohol into gentisyl alcohol. The pathway begins with the synthesis of 6-methylsalicylic acid by the polyketide synthase (PKS) patK via condensation of acetate and malonate units. The 6-methylsalicylic acid decarboxylase patG then catalyzes the decarboxylation of 6-methylsalicylic acid to yield m-cresol (also known as 3-methylphenol). These first reactions occur in the cytosol. The intermediate m-cresol is then transported into the endoplasmic reticulum where the cytochrome P450 monooxygenase patH converts it to m-hydroxybenzyl alcohol, which is further converted to gentisyl alcohol by the cytochrome P450 monooxygenase patI. The oxidoreductases patJ and patO further convert gentisyl alcohol to isoepoxydon in the vacuole. PatN catalyzes then the transformation of isoepoxydon into phyllostine. The cluster protein patF is responsible for the conversion from phyllostine to neopatulin whereas the alcohol dehydrogenase patD converts neopatulin to E-ascladiol. The steps between isoepoxydon and E-ascladiol occur in the cytosol, and E-ascladiol is probably secreted to the extracellular space by one of the cluster-specific transporters patC or patM. Finally, the secreted patulin synthase patE catalyzes the conversion of E-ascladiol to patulin. This is Cytochrome P450 monooxygenase patI from Aspergillus clavatus (strain ATCC 1007 / CBS 513.65 / DSM 816 / NCTC 3887 / NRRL 1 / QM 1276 / 107).